The following is a 203-amino-acid chain: Holliday junction branch migration complex subunit RuvA (203 aa).

Residues 1-65 (MIAYIHGKLL…EDAFDLYGFP (65 aa)) form a domain I region. The segment at 66-144 (CFDDREVFRT…TLKSATVRSG (79 aa)) is domain II. Residues 145–155 (ACPVEGDRSEF) form a flexible linker region. Residues 155-203 (FLDALSGLRNLGYGDDEVRDFLKDIFDEEPDLDAGGAIRVALKKISQNK) are domain III.

The protein belongs to the RuvA family. As to quaternary structure, homotetramer. Forms an RuvA(8)-RuvB(12)-Holliday junction (HJ) complex. HJ DNA is sandwiched between 2 RuvA tetramers; dsDNA enters through RuvA and exits via RuvB. An RuvB hexamer assembles on each DNA strand where it exits the tetramer. Each RuvB hexamer is contacted by two RuvA subunits (via domain III) on 2 adjacent RuvB subunits; this complex drives branch migration. In the full resolvosome a probable DNA-RuvA(4)-RuvB(12)-RuvC(2) complex forms which resolves the HJ.

The protein localises to the cytoplasm. Functionally, the RuvA-RuvB-RuvC complex processes Holliday junction (HJ) DNA during genetic recombination and DNA repair, while the RuvA-RuvB complex plays an important role in the rescue of blocked DNA replication forks via replication fork reversal (RFR). RuvA specifically binds to HJ cruciform DNA, conferring on it an open structure. The RuvB hexamer acts as an ATP-dependent pump, pulling dsDNA into and through the RuvAB complex. HJ branch migration allows RuvC to scan DNA until it finds its consensus sequence, where it cleaves and resolves the cruciform DNA. The protein is Holliday junction branch migration complex subunit RuvA of Maridesulfovibrio salexigens (strain ATCC 14822 / DSM 2638 / NCIMB 8403 / VKM B-1763) (Desulfovibrio salexigens).